The chain runs to 334 residues: Holliday junction branch migration complex subunit RuvB (334 aa).

Residues 4–184 form a large ATPase domain (RuvB-L) region; the sequence is ADRLIQPQLQ…FGIPLRLEFY (181 aa). Residues arginine 24, glycine 65, lysine 68, threonine 69, threonine 70, 131 to 133, arginine 174, tyrosine 184, and arginine 221 each bind ATP; that span reads EDY. Position 69 (threonine 69) interacts with Mg(2+). The segment at 185 to 255 is small ATPAse domain (RuvB-S); the sequence is NIKDLSTIVT…VADHALDLLD (71 aa). Residues 258–334 form a head domain (RuvB-H) region; it reads NEGFDYMDRK…YQHFQLIKPE (77 aa). 3 residues coordinate DNA: arginine 294, arginine 313, and arginine 318.

It belongs to the RuvB family. In terms of assembly, homohexamer. Forms an RuvA(8)-RuvB(12)-Holliday junction (HJ) complex. HJ DNA is sandwiched between 2 RuvA tetramers; dsDNA enters through RuvA and exits via RuvB. An RuvB hexamer assembles on each DNA strand where it exits the tetramer. Each RuvB hexamer is contacted by two RuvA subunits (via domain III) on 2 adjacent RuvB subunits; this complex drives branch migration. In the full resolvosome a probable DNA-RuvA(4)-RuvB(12)-RuvC(2) complex forms which resolves the HJ.

It is found in the cytoplasm. It carries out the reaction ATP + H2O = ADP + phosphate + H(+). The RuvA-RuvB-RuvC complex processes Holliday junction (HJ) DNA during genetic recombination and DNA repair, while the RuvA-RuvB complex plays an important role in the rescue of blocked DNA replication forks via replication fork reversal (RFR). RuvA specifically binds to HJ cruciform DNA, conferring on it an open structure. The RuvB hexamer acts as an ATP-dependent pump, pulling dsDNA into and through the RuvAB complex. RuvB forms 2 homohexamers on either side of HJ DNA bound by 1 or 2 RuvA tetramers; 4 subunits per hexamer contact DNA at a time. Coordinated motions by a converter formed by DNA-disengaged RuvB subunits stimulates ATP hydrolysis and nucleotide exchange. Immobilization of the converter enables RuvB to convert the ATP-contained energy into a lever motion, pulling 2 nucleotides of DNA out of the RuvA tetramer per ATP hydrolyzed, thus driving DNA branch migration. The RuvB motors rotate together with the DNA substrate, which together with the progressing nucleotide cycle form the mechanistic basis for DNA recombination by continuous HJ branch migration. Branch migration allows RuvC to scan DNA until it finds its consensus sequence, where it cleaves and resolves cruciform DNA. In Shewanella sp. (strain W3-18-1), this protein is Holliday junction branch migration complex subunit RuvB.